The primary structure comprises 105 residues: MAPAGMSGAQDNSCLYQEIAPSFQRLPCPRTSSRHFSEAMTCPCGWRPFKGGPGGLKGPVWPAKEENSCSHGRIQRVQRRRVPSASPLIQKINRRSVLFHPYCWS.

Expressed at high levels in adult testis, at moderate levels in sperm and at low levels in fetal testis. Not detected in other tissues.

This chain is Spermatogenesis-associated protein 8 (SPATA8), found in Homo sapiens (Human).